The chain runs to 197 residues: Fucoxanthin-chlorophyll a-c binding protein E, chloroplastic (197 aa).

Residues 1–31 constitute a chloroplast transit peptide; the sequence is MKFVVFASLLASAARFAPAQQSARTSVATNM. Helical transmembrane passes span 73 to 94, 114 to 134, and 174 to 196; these read ISML…PGDI, ISGA…LAVM, and GRAA…SLIP.

This sequence belongs to the fucoxanthin chlorophyll protein family. The LHC complex of chromophytic algae is composed of fucoxanthin, chlorophyll A and C bound non-covalently by fucoxanthin chlorophyll proteins (FCPs). The ratio of the pigments in LHC; fucoxanthin: chlorophyll C: chlorophyll A; (0.6-1): (0.1-0.3): (1).

It is found in the plastid. The protein resides in the chloroplast thylakoid membrane. Its function is as follows. The light-harvesting complex (LHC) functions as a light receptor, it captures and delivers excitation energy to photosystems with which it is closely associated. Energy is transferred from the carotenoid and chlorophyll C (or B) to chlorophyll A and the photosynthetic reaction centers where it is used to synthesize ATP and reducing power. The polypeptide is Fucoxanthin-chlorophyll a-c binding protein E, chloroplastic (FCPE) (Phaeodactylum tricornutum (Diatom)).